The primary structure comprises 476 residues: Inosine-5'-monophosphate dehydrogenase (476 aa).

CBS domains follow at residues 92 to 150 (MIEN…IADV) and 151 to 207 (MTKD…PNAS). Residues Asp244 and 294-296 (GVG) each bind NAD(+). Gly296 and Gly298 together coordinate K(+). Ser299 serves as a coordination point for IMP. Cys301 provides a ligand contact to K(+). The active-site Thioimidate intermediate is the Cys301. IMP is bound by residues 334–336 (DGG), 357–358 (GS), 381–385 (YRGMA), and Glu413. Residues Glu467 and Ser468 each coordinate K(+).

It belongs to the IMPDH/GMPR family. In terms of assembly, homotetramer. It depends on K(+) as a cofactor.

The enzyme catalyses IMP + NAD(+) + H2O = XMP + NADH + H(+). It participates in purine metabolism; XMP biosynthesis via de novo pathway; XMP from IMP: step 1/1. Mycophenolic acid (MPA) is a non-competitive inhibitor that prevents formation of the closed enzyme conformation by binding to the same site as the amobile flap. In contrast, mizoribine monophosphate (MZP) is a competitive inhibitor that induces the closed conformation. MPA is a potent inhibitor of mammalian IMPDHs but a poor inhibitor of the bacterial enzymes. MZP is a more potent inhibitor of bacterial IMPDH. Its function is as follows. Catalyzes the conversion of inosine 5'-phosphate (IMP) to xanthosine 5'-phosphate (XMP), the first committed and rate-limiting step in the de novo synthesis of guanine nucleotides, and therefore plays an important role in the regulation of cell growth. The chain is Inosine-5'-monophosphate dehydrogenase from Nitrosopumilus maritimus (strain SCM1).